A 347-amino-acid chain; its full sequence is Protein RecA (347 aa).

67-74 contributes to the ATP binding site; that stretch reads GPESSGKT.

It belongs to the RecA family.

The protein localises to the cytoplasm. Its function is as follows. Can catalyze the hydrolysis of ATP in the presence of single-stranded DNA, the ATP-dependent uptake of single-stranded DNA by duplex DNA, and the ATP-dependent hybridization of homologous single-stranded DNAs. It interacts with LexA causing its activation and leading to its autocatalytic cleavage. The polypeptide is Protein RecA (Helicobacter pylori (strain HPAG1)).